A 362-amino-acid polypeptide reads, in one-letter code: Sphingolipid delta(4)-desaturase (362 aa).

The span at 1-10 (MAESTATTTA) shows a compositional bias: low complexity. The interval 1–20 (MAESTATTTAVPPPAEESWN) is disordered. The next 3 helical transmembrane spans lie at 60-80 (PLTK…AYLL), 90-110 (FFLT…LAIH), and 121-143 (TLYN…AASF). The Histidine box-1 signature appears at 110–114 (HELSH). The short motif at 147–151 (HMEHH) is the Histidine box-2 element. Helical transmembrane passes span 169–189 (LILF…LLFY), 200–220 (PFTL…YLVV), and 228–248 (LAYF…AGHF). A Histidine box-3 motif is present at residues 290 to 294 (HIEHH).

Belongs to the fatty acid desaturase type 1 family. DEGS subfamily.

Its subcellular location is the membrane. It catalyses the reaction an N-acylsphinganine + 2 Fe(II)-[cytochrome b5] + O2 + 2 H(+) = an N-acylsphing-4-enine + 2 Fe(III)-[cytochrome b5] + 2 H2O. Its pathway is lipid metabolism; sphingolipid metabolism. In terms of biological role, delta(4)-fatty-acid desaturase which introduces a double bond at the 4-position in the long-chain base (LCB) of ceramides. Required for sphingosine biosynthesis. In Schizosaccharomyces pombe (strain 972 / ATCC 24843) (Fission yeast), this protein is Sphingolipid delta(4)-desaturase (dsd1).